The following is a 195-amino-acid chain: Adenylate kinase (195 aa).

Residue 11 to 16 (GAGKGT) coordinates ATP. Residues 31–60 (STGDIFRAAVRNQTPLGQQVQAYLDSGRLV) are NMP. AMP is bound by residues threonine 32, arginine 37, 58–60 (RLV), 86–89 (GFPR), and glutamine 93. The segment at 127 to 137 (LRAEKESRKDD) is LID. Residue arginine 128 coordinates ATP. Residues arginine 134 and arginine 145 each contribute to the AMP site. Position 173 (glutamine 173) interacts with ATP.

It belongs to the adenylate kinase family. In terms of assembly, monomer.

It is found in the cytoplasm. It catalyses the reaction AMP + ATP = 2 ADP. It functions in the pathway purine metabolism; AMP biosynthesis via salvage pathway; AMP from ADP: step 1/1. Its function is as follows. Catalyzes the reversible transfer of the terminal phosphate group between ATP and AMP. Plays an important role in cellular energy homeostasis and in adenine nucleotide metabolism. The protein is Adenylate kinase of Cyanothece sp. (strain PCC 7425 / ATCC 29141).